Here is a 177-residue protein sequence, read N- to C-terminus: Embryogenesis-like protein (177 aa).

The stretch at 98–118 (VDEINLKFAEAREEIEMAMDA) forms a coiled coil.

As to quaternary structure, interacts with HAG1/GCN5. Expressed in flowers, leaves, stems and siliques.

The protein localises to the nucleus. In terms of biological role, activates gene expression by recruiting HAG1/GCN5 and triggering subsequent histone H3 acetylation of target genes promoters. The polypeptide is Embryogenesis-like protein (Arabidopsis thaliana (Mouse-ear cress)).